The primary structure comprises 408 residues: Tryptophan synthase beta chain (408 aa).

K103 is subject to N6-(pyridoxal phosphate)lysine.

Belongs to the TrpB family. Tetramer of two alpha and two beta chains. Pyridoxal 5'-phosphate is required as a cofactor.

It catalyses the reaction (1S,2R)-1-C-(indol-3-yl)glycerol 3-phosphate + L-serine = D-glyceraldehyde 3-phosphate + L-tryptophan + H2O. It functions in the pathway amino-acid biosynthesis; L-tryptophan biosynthesis; L-tryptophan from chorismate: step 5/5. Its function is as follows. The beta subunit is responsible for the synthesis of L-tryptophan from indole and L-serine. This is Tryptophan synthase beta chain from Koribacter versatilis (strain Ellin345).